The sequence spans 284 residues: 2-dehydro-3-deoxyphosphooctonate aldolase (284 aa).

It belongs to the KdsA family.

Its subcellular location is the cytoplasm. It carries out the reaction D-arabinose 5-phosphate + phosphoenolpyruvate + H2O = 3-deoxy-alpha-D-manno-2-octulosonate-8-phosphate + phosphate. Its pathway is carbohydrate biosynthesis; 3-deoxy-D-manno-octulosonate biosynthesis; 3-deoxy-D-manno-octulosonate from D-ribulose 5-phosphate: step 2/3. It participates in bacterial outer membrane biogenesis; lipopolysaccharide biosynthesis. This chain is 2-dehydro-3-deoxyphosphooctonate aldolase, found in Citrobacter koseri (strain ATCC BAA-895 / CDC 4225-83 / SGSC4696).